A 140-amino-acid chain; its full sequence is Large-conductance mechanosensitive channel (140 aa).

The next 2 membrane-spanning stretches (helical) occupy residues 11–31 (FAMRGNVVDMAVGIIIGGAFG) and 82–102 (GNFIQVTLDFIIIAFAVFLLV).

Belongs to the MscL family. Homopentamer.

The protein resides in the cell inner membrane. Channel that opens in response to stretch forces in the membrane lipid bilayer. May participate in the regulation of osmotic pressure changes within the cell. The chain is Large-conductance mechanosensitive channel from Parabacteroides distasonis (strain ATCC 8503 / DSM 20701 / CIP 104284 / JCM 5825 / NCTC 11152).